A 287-amino-acid chain; its full sequence is Nucleotide-binding protein Ppro_0977 (287 aa).

ATP is bound at residue 8–15 (GMSGSGKS). 59-62 (DIRG) is a GTP binding site.

It belongs to the RapZ-like family.

Displays ATPase and GTPase activities. The chain is Nucleotide-binding protein Ppro_0977 from Pelobacter propionicus (strain DSM 2379 / NBRC 103807 / OttBd1).